A 287-amino-acid polypeptide reads, in one-letter code: Ribonuclease Z (287 aa).

7 residues coordinate Zn(2+): H64, H66, D68, H69, H124, D191, and H250. The active-site Proton acceptor is D68.

The protein belongs to the RNase Z family. In terms of assembly, homodimer. Requires Zn(2+) as cofactor.

The catalysed reaction is Endonucleolytic cleavage of RNA, removing extra 3' nucleotides from tRNA precursor, generating 3' termini of tRNAs. A 3'-hydroxy group is left at the tRNA terminus and a 5'-phosphoryl group is left at the trailer molecule.. Functionally, zinc phosphodiesterase, which displays some tRNA 3'-processing endonuclease activity. Probably involved in tRNA maturation, by removing a 3'-trailer from precursor tRNA. This chain is Ribonuclease Z, found in Pyrobaculum calidifontis (strain DSM 21063 / JCM 11548 / VA1).